Reading from the N-terminus, the 331-residue chain is High-affinity nickel-transport protein NixA (331 aa).

Residues 1–5 are Cytoplasmic-facing; that stretch reads MKLWF. Residues 6 to 26 traverse the membrane as a helical segment; it reads PYFLAIVFLHALGLALLFMAN. Over 27–33 the chain is Periplasmic; that stretch reads NASFYAA. The helical transmembrane segment at 34-54 threads the bilayer; sequence ASMAYMLGAKHAFDADHIACI. The Cytoplasmic segment spans residues 55-66; it reads DNTIRKLTQQGK. The helical transmembrane segment at 67 to 87 threads the bilayer; that stretch reads NAYGVGFYFSMGHSSVVILMT. Residues 88–113 are Periplasmic-facing; that stretch reads IISAFAIAWAKEHTPMLEEIGGVVGT. A helical transmembrane segment spans residues 114 to 135; that stretch reads LVSGLFLLIIGLLNAIILLDLL. The Cytoplasmic segment spans residues 136–178; that stretch reads KIFKKSHSNESLSQQQNEEIERLLTSRGLLNRFFKPLFNFVSK. Residues 179 to 199 traverse the membrane as a helical segment; that stretch reads SWHIYPIGFLFGLGFDTASEI. Topologically, residues 200-225 are periplasmic; that stretch reads ALLALSSSAIKVSMVGMLSLPILFAA. The helical transmembrane segment at 226 to 246 threads the bilayer; the sequence is GMSLFDTLDGAFMLKAYDWAF. At 247–252 the chain is on the cytoplasmic side; sequence KTPLRK. A helical transmembrane segment spans residues 253-273; sequence IYYNISITALSVFIALFIGLI. Residues 274-302 lie on the Periplasmic side of the membrane; it reads ELFQVVSEKLHLKFENRLLRALQSLEFTD. The chain crosses the membrane as a helical span at residues 303–322; it reads LGYYLVGLFVIAFLGSFFLW. At 323–331 the chain is on the cytoplasmic side; the sequence is KIKFSKLES.

The protein belongs to the NiCoT transporter (TC 2.A.52) family.

It localises to the cell inner membrane. Its function is as follows. High-affinity nickel intake protein. Imports nickel ions in an energy-dependent fashion. Necessary for the expression of catalytically active urease. This chain is High-affinity nickel-transport protein NixA (nixA), found in Helicobacter pylori (strain ATCC 700392 / 26695) (Campylobacter pylori).